Consider the following 475-residue polypeptide: Ribonuclease Y (475 aa).

The disordered stretch occupies residues 34–73 (EFERESRERRNELQRVERRLMQKEESLDKKSETLEQKDDR). A KH domain is found at 165-228 (TVTVVQLPND…EVARIALEKL (64 aa)). The 94-residue stretch at 291-384 (VLKHAIEVSH…VTAADAISAA (94 aa)) folds into the HD domain.

The protein belongs to the RNase Y family.

Functionally, endoribonuclease that initiates mRNA decay. This chain is Ribonuclease Y, found in Alkaliphilus metalliredigens (strain QYMF).